We begin with the raw amino-acid sequence, 166 residues long: MKILVSKKITLDLFCKNPIQIIEKEKNEIISISKNKKTVFYVIQPKALKKLFDIKEYFVKSKITKKEKKIIEKFPMHTNWIPDKDFIQKAALWGISLNEEVSKYELASFISYWEAEGLFFHHIQWQQKLARSLERSRSMNNAIQQKKDITYIPVPDQKTPDGFRGK.

The protein belongs to the DnaT family. As to quaternary structure, homooligomerizes. Interacts with PriB. Component of the replication restart primosome. Primosome assembly occurs via a 'hand-off' mechanism. PriA binds to replication forks, subsequently PriB then DnaT bind; DnaT then displaces ssDNA to generate the helicase loading substrate.

Involved in the restart of stalled replication forks, which reloads the replicative helicase on sites other than the origin of replication. Can function in multiple replication restart pathways. Displaces ssDNA from a PriB-ssDNA complex. Probably forms a spiral filament on ssDNA. The sequence is that of Replication restart protein DnaT from Buchnera aphidicola subsp. Schizaphis graminum (strain Sg).